A 110-amino-acid chain; its full sequence is Nucleoid-associated protein YE3092 (110 aa).

It belongs to the YbaB/EbfC family. As to quaternary structure, homodimer.

The protein resides in the cytoplasm. Its subcellular location is the nucleoid. Functionally, binds to DNA and alters its conformation. May be involved in regulation of gene expression, nucleoid organization and DNA protection. In Yersinia enterocolitica serotype O:8 / biotype 1B (strain NCTC 13174 / 8081), this protein is Nucleoid-associated protein YE3092.